We begin with the raw amino-acid sequence, 306 residues long: MSQDRLLRNVISVMIMAGYEVSEVFAMRPKSFDIIAGNGERIVVLKVISHIDSISEENARDLDRIARNLDGTPLIVGERARDAELERGAVYVRYGIFAINYPTLHDYFVEDSPPLIYASPGGLYVNISGERLRELRETRSLSLGDLGQILGVSRRTVAKYEAGMGTTIEIALRIEETFDSGVIEPIDLIQSKSQFTKPEMPEVPEEIPIQAAIEEMGMHVQPMYHAPFQALVRYDSHTILTGYGSAQKVARRAGIIGNISQVTRTHAMCVMTDDQRQRRIGRTLMIGEDSLLSLDEPDDLINLILN.

The HTH cro/C1-type domain occupies 132–189 (LRELRETRSLSLGDLGQILGVSRRTVAKYEAGMGTTIEIALRIEETFDSGVIEPIDLI). The H-T-H motif DNA-binding region spans 143–162 (LGDLGQILGVSRRTVAKYEA).

The protein is Putative HTH-type transcriptional regulatory protein Mhun_2548 of Methanospirillum hungatei JF-1 (strain ATCC 27890 / DSM 864 / NBRC 100397 / JF-1).